The following is a 121-amino-acid chain: MQPYEKYLKLNSQKLRADQTDTERKLWQRINRDQLLGFRFNRQKPLLSYIVDFYCAKTKLIIELDGSQHYKPDYQEKDALRDAELNSLGFTVMRFSNDEVMREIEAVVEQIYLFLENVRTD.

The protein to E.coli YcjD and H.influenzae HI_1162.

This is an uncharacterized protein from Haemophilus influenzae (strain ATCC 51907 / DSM 11121 / KW20 / Rd).